The following is a 139-amino-acid chain: Small ribosomal subunit protein uS12 (139 aa).

The segment at 118–139 (AGVANRNQSRSRYGTKKPKPKS) is disordered. Over residues 130–139 (YGTKKPKPKS) the composition is skewed to basic residues.

Belongs to the universal ribosomal protein uS12 family. Part of the 30S ribosomal subunit. Contacts proteins S8 and S17. May interact with IF1 in the 30S initiation complex.

With S4 and S5 plays an important role in translational accuracy. Its function is as follows. Interacts with and stabilizes bases of the 16S rRNA that are involved in tRNA selection in the A site and with the mRNA backbone. Located at the interface of the 30S and 50S subunits, it traverses the body of the 30S subunit contacting proteins on the other side and probably holding the rRNA structure together. The combined cluster of proteins S8, S12 and S17 appears to hold together the shoulder and platform of the 30S subunit. The sequence is that of Small ribosomal subunit protein uS12 from Mycoplasma mobile (strain ATCC 43663 / 163K / NCTC 11711) (Mesomycoplasma mobile).